The sequence spans 70 residues: Cold shock-like protein CspJ (70 aa).

A CSD domain is found at 7-67 (GLVKWFNPEK…GPKGPSAVNV (61 aa)).

Its subcellular location is the cytoplasm. The protein is Cold shock-like protein CspJ (cspJ) of Salmonella typhimurium (strain SL1344).